The primary structure comprises 235 residues: Leucyl/phenylalanyl-tRNA--protein transferase (235 aa).

The protein belongs to the L/F-transferase family.

It localises to the cytoplasm. The catalysed reaction is N-terminal L-lysyl-[protein] + L-leucyl-tRNA(Leu) = N-terminal L-leucyl-L-lysyl-[protein] + tRNA(Leu) + H(+). It carries out the reaction N-terminal L-arginyl-[protein] + L-leucyl-tRNA(Leu) = N-terminal L-leucyl-L-arginyl-[protein] + tRNA(Leu) + H(+). The enzyme catalyses L-phenylalanyl-tRNA(Phe) + an N-terminal L-alpha-aminoacyl-[protein] = an N-terminal L-phenylalanyl-L-alpha-aminoacyl-[protein] + tRNA(Phe). Functions in the N-end rule pathway of protein degradation where it conjugates Leu, Phe and, less efficiently, Met from aminoacyl-tRNAs to the N-termini of proteins containing an N-terminal arginine or lysine. The sequence is that of Leucyl/phenylalanyl-tRNA--protein transferase from Magnetococcus marinus (strain ATCC BAA-1437 / JCM 17883 / MC-1).